The primary structure comprises 339 residues: Dihydroorotate dehydrogenase (quinone) (339 aa).

Residues 62-66 and Thr-86 each bind FMN; that span reads AGMDK. Lys-66 serves as a coordination point for substrate. Residue 111–115 coordinates substrate; sequence NRMGF. Positions 139 and 172 each coordinate FMN. Asn-172 lines the substrate pocket. Ser-175 serves as the catalytic Nucleophile. Asn-177 lines the substrate pocket. The FMN site is built by Lys-217 and Thr-245. 246–247 contributes to the substrate binding site; the sequence is NT. FMN is bound by residues Gly-268, Gly-297, and 318-319; that span reads YS.

Belongs to the dihydroorotate dehydrogenase family. Type 2 subfamily. In terms of assembly, monomer. The cofactor is FMN.

It localises to the cell membrane. The catalysed reaction is (S)-dihydroorotate + a quinone = orotate + a quinol. It functions in the pathway pyrimidine metabolism; UMP biosynthesis via de novo pathway; orotate from (S)-dihydroorotate (quinone route): step 1/1. Catalyzes the conversion of dihydroorotate to orotate with quinone as electron acceptor. The protein is Dihydroorotate dehydrogenase (quinone) of Shewanella oneidensis (strain ATCC 700550 / JCM 31522 / CIP 106686 / LMG 19005 / NCIMB 14063 / MR-1).